A 156-amino-acid polypeptide reads, in one-letter code: Putative HTH-type transcriptional regulator YffB (156 aa).

The HTH rrf2-type domain maps to 2–137; that stretch reads KLSSGWEQSV…SNVSLAQVAD (136 aa).

The protein is Putative HTH-type transcriptional regulator YffB (yffB) of Lactococcus lactis subsp. lactis (strain IL1403) (Streptococcus lactis).